Reading from the N-terminus, the 890-residue chain is Alanine--tRNA ligase (890 aa).

Histidine 572, histidine 576, cysteine 674, and histidine 678 together coordinate Zn(2+).

Belongs to the class-II aminoacyl-tRNA synthetase family. Zn(2+) is required as a cofactor.

Its subcellular location is the cytoplasm. It catalyses the reaction tRNA(Ala) + L-alanine + ATP = L-alanyl-tRNA(Ala) + AMP + diphosphate. Functionally, catalyzes the attachment of alanine to tRNA(Ala) in a two-step reaction: alanine is first activated by ATP to form Ala-AMP and then transferred to the acceptor end of tRNA(Ala). Also edits incorrectly charged Ser-tRNA(Ala) and Gly-tRNA(Ala) via its editing domain. In Saccharopolyspora erythraea (strain ATCC 11635 / DSM 40517 / JCM 4748 / NBRC 13426 / NCIMB 8594 / NRRL 2338), this protein is Alanine--tRNA ligase.